A 663-amino-acid chain; its full sequence is ATP-dependent zinc metalloprotease FtsH (663 aa).

The Stromal segment spans residues 1 to 12; sequence MNKKETNTSWWR. The helical transmembrane segment at 13 to 33 threads the bilayer; that stretch reads IILISLGISIICILAAFLAMK. The Lumenal segment spans residues 34–135; the sequence is DGFFVLENNT…HPPKLDIFKT (102 aa). The helical transmembrane segment at 136-156 threads the bilayer; sequence ISDTLGSLIVPGLVVAVFYLF. The Stromal portion of the chain corresponds to 157–663; the sequence is LERANNNNNN…KIYESKFPKK (507 aa). A disordered region spans residues 165-184; sequence NNNSNGSPFGPGGGPNQNMR. 244–251 lines the ATP pocket; that stretch reads GPPGTGKT. His465 is a Zn(2+) binding site. The active site involves Glu466. Zn(2+) is bound by residues His469 and Asp543.

In the central section; belongs to the AAA ATPase family. The protein in the C-terminal section; belongs to the peptidase M41 family. In terms of assembly, homohexamer. It depends on Zn(2+) as a cofactor.

It localises to the plastid. Its subcellular location is the chloroplast thylakoid membrane. Its function is as follows. Acts as a processive, ATP-dependent zinc metallopeptidase. In Heterosigma akashiwo (strain NIES-293 / 8280G21-1), this protein is ATP-dependent zinc metalloprotease FtsH.